The primary structure comprises 397 residues: Staphylopine export protein (397 aa).

Transmembrane regions (helical) follow at residues 12–32, 38–58, 77–97, 102–122, 134–154, 158–178, 217–237, 239–259, 285–305, 309–329, 337–357, and 363–383; these read LYILTLMFFSANAILNVFIPL, GATNTVIGIVMGAYMLTAMVF, IILIINAIALIIYGFTGLEGY, VMQGVCTAFFSMSLQLGIIDA, LYSLFSTIPNLIGPLVAVGIW, NISLFAIVIIFIALTTTFFGY, GIIMIVASIVFGAVSTFVPLY, VSLGFANAGIFLTIQAIAVVA, LLVIASFVVAFGPQVGAIIFY, ILIGMTQAMVYPTLTSYLSFV, MLLGLFIACADLGISLGGALM, and LVGFKWMYLICGMLVIVIMIM.

The protein belongs to the major facilitator superfamily.

The protein resides in the cell membrane. In terms of biological role, involved in the export of the metallophore staphylopine. This is Staphylopine export protein from Staphylococcus aureus (strain Mu50 / ATCC 700699).